Reading from the N-terminus, the 336-residue chain is Palmitoyltransferase SWF1 (336 aa).

Topologically, residues 1–2 (MS) are lumenal. The helical transmembrane segment at 3–23 (WNLLFVLLIGFVVLILLSPVF) threads the bilayer. Residues 24–50 (KSTWPFSTFYRNVFQPFLVDDQKYRWK) are Cytoplasmic-facing. The chain crosses the membrane as a helical span at residues 51–71 (LHLVPLFYTSIYLYLVYTYHM). Over 72–86 (RVESTIKNELFLLER) the chain is Lumenal. The chain crosses the membrane as a helical span at residues 87 to 107 (ILIVPIIILPPVALGILAMVS). The Cytoplasmic segment spans residues 108-179 (RAEDSKDHKS…CIGKGNYLQF (72 aa)). The region spanning 134–184 (IKCSTCRIVKPARSKHCSICNRCVLVADHHCIWINNCIGKGNYLQFYLFLI) is the DHHC domain. Residues 180–200 (YLFLISNIFSMCYAFLRLWYI) form a helical membrane-spanning segment. Residues 201–216 (SLNSTSTLPRAVLTLT) lie on the Lumenal side of the membrane. A helical transmembrane segment spans residues 217-237 (ILCGCFTIICAIFTYLQLAIV). At 238–336 (KEGMTTNEQD…TFLANLTDLI (99 aa)) the chain is on the cytoplasmic side.

Belongs to the DHHC palmitoyltransferase family. SWF1 subfamily.

It localises to the endoplasmic reticulum membrane. The catalysed reaction is L-cysteinyl-[protein] + hexadecanoyl-CoA = S-hexadecanoyl-L-cysteinyl-[protein] + CoA. In terms of biological role, palmitoyltransferase that targets several endosomal SNAREs. Palmitoylates the SNAREs SNC1, SNC2, SYN8 and TLG1, at cysteine residues close to the cytoplasmic end of their transmembrane domain. May have a role in the cellular quality control of transmembrane domain-containing proteins. The polypeptide is Palmitoyltransferase SWF1 (SWF1) (Saccharomyces cerevisiae (strain ATCC 204508 / S288c) (Baker's yeast)).